The sequence spans 250 residues: MKICLIDETGAGDGALSVLAARWGLEHDEDNLMALVLTPEHLELRKRDEPKLGGIFVDFVGGAMAHRRKFGGGRGEAVAKAVGIKGDYLPDVVDATAGLGRDAFVLASVGCRVRMLERNPVVAALLDDGLARGYADAEIGGWLQERLQLIHASSLTALSDITPRPQVVCLDPMFPHKQKSALVKKEMRVFQSLVGPDLDADGLLEPARLLATKRVVVKRPDYAPPLANVATPNAVVTKGHRFDIYAGTPV.

Residues 101 to 102 (RD), 117 to 118 (ER), 153 to 154 (SS), and Asp-171 each bind S-adenosyl-L-methionine.

Belongs to the methyltransferase superfamily. RsmJ family.

Its subcellular location is the cytoplasm. It carries out the reaction guanosine(1516) in 16S rRNA + S-adenosyl-L-methionine = N(2)-methylguanosine(1516) in 16S rRNA + S-adenosyl-L-homocysteine + H(+). Specifically methylates the guanosine in position 1516 of 16S rRNA. This is Ribosomal RNA small subunit methyltransferase J from Escherichia coli (strain UTI89 / UPEC).